Consider the following 66-residue polypeptide: Large ribosomal subunit protein uL29 (66 aa).

The protein belongs to the universal ribosomal protein uL29 family.

In Rhizobium johnstonii (strain DSM 114642 / LMG 32736 / 3841) (Rhizobium leguminosarum bv. viciae), this protein is Large ribosomal subunit protein uL29.